The sequence spans 371 residues: Putative RING finger protein ORF117 (371 aa).

Residues 72–108 (CCICFRKDVIYKEVPCGHYICVECYKEPIRNVCPECN) form an RING-type zinc finger. Acidic residues predominate over residues 178–192 (EEEMNESEAEEEEPV). The interval 178 to 218 (EEEMNESEAEEEEPVPEIAQFEALNTPPPPPTNRRPKIRRP) is disordered.

The protein is Putative RING finger protein ORF117 of Magallana gigas (Pacific oyster).